A 206-amino-acid polypeptide reads, in one-letter code: Large ribosomal subunit protein uL4 (206 aa).

Belongs to the universal ribosomal protein uL4 family. As to quaternary structure, part of the 50S ribosomal subunit.

In terms of biological role, one of the primary rRNA binding proteins, this protein initially binds near the 5'-end of the 23S rRNA. It is important during the early stages of 50S assembly. It makes multiple contacts with different domains of the 23S rRNA in the assembled 50S subunit and ribosome. Functionally, forms part of the polypeptide exit tunnel. The polypeptide is Large ribosomal subunit protein uL4 (Rhodopseudomonas palustris (strain BisB5)).